The chain runs to 338 residues: 1-aminocyclopropane-1-carboxylate deaminase (338 aa).

At K51 the chain carries N6-(pyridoxal phosphate)lysine. Residue S78 is the Nucleophile of the active site.

Belongs to the ACC deaminase/D-cysteine desulfhydrase family. Homotrimer. Requires pyridoxal 5'-phosphate as cofactor.

It catalyses the reaction 1-aminocyclopropane-1-carboxylate + H2O = 2-oxobutanoate + NH4(+). Catalyzes a cyclopropane ring-opening reaction, the irreversible conversion of 1-aminocyclopropane-1-carboxylate (ACC) to ammonia and alpha-ketobutyrate. Allows growth on ACC as a nitrogen source. This Burkholderia ambifaria (strain ATCC BAA-244 / DSM 16087 / CCUG 44356 / LMG 19182 / AMMD) (Burkholderia cepacia (strain AMMD)) protein is 1-aminocyclopropane-1-carboxylate deaminase.